The primary structure comprises 199 residues: MTPLAPWDPKYEAKAGPRPVWGANCSSGASFSGRTLCHPSFWPLYEAASGRGLRPVAPATGHWNGQQAPPDAGFPVVCCEDVFLSDPLLPRGQRVPLYLSKAPQQMMGSLKLLPPPPIMSARVLPRPSPSRGPSTAWLSGPELIALTGLLQMSQGEPRPSSSAVGPPDHTSDPPSPCGSPSSSQGADLSLPQTPDTHCP.

Composition is skewed to polar residues over residues Q151 to A163 and Q184 to P199. Residues Q151–P199 are disordered.

May be a component of the mSIN3A corepressor complex. Interacts with SIN3A. Interacts with HDAC2.

The protein resides in the nucleus. It localises to the cytoplasm. In terms of biological role, involved in the transcriptional repression mediated by the mSIN3A but not the N-CoR corepressor complex. This chain is Histone deacetylase complex subunit SAP25 (SAP25), found in Homo sapiens (Human).